We begin with the raw amino-acid sequence, 355 residues long: Phospho-N-acetylmuramoyl-pentapeptide-transferase (355 aa).

The next 10 membrane-spanning stretches (helical) occupy residues 14–34, 40–60, 84–104, 107–127, 147–167, 176–196, 205–225, 227–247, 268–290, and 334–354; these read PTGT…VVFF, LLIP…QVVP, GTPT…ALIW, FTPN…IGWL, LILQ…NQVS, LVIP…VAES, VDGL…IIIA, SHPD…GFIF, ALAA…GLFF, and TKIV…AIWS.

Belongs to the glycosyltransferase 4 family. MraY subfamily. Mg(2+) is required as a cofactor.

It is found in the cell inner membrane. The catalysed reaction is UDP-N-acetyl-alpha-D-muramoyl-L-alanyl-gamma-D-glutamyl-meso-2,6-diaminopimeloyl-D-alanyl-D-alanine + di-trans,octa-cis-undecaprenyl phosphate = di-trans,octa-cis-undecaprenyl diphospho-N-acetyl-alpha-D-muramoyl-L-alanyl-D-glutamyl-meso-2,6-diaminopimeloyl-D-alanyl-D-alanine + UMP. The protein operates within cell wall biogenesis; peptidoglycan biosynthesis. In terms of biological role, catalyzes the initial step of the lipid cycle reactions in the biosynthesis of the cell wall peptidoglycan: transfers peptidoglycan precursor phospho-MurNAc-pentapeptide from UDP-MurNAc-pentapeptide onto the lipid carrier undecaprenyl phosphate, yielding undecaprenyl-pyrophosphoryl-MurNAc-pentapeptide, known as lipid I. The sequence is that of Phospho-N-acetylmuramoyl-pentapeptide-transferase from Microcystis aeruginosa (strain NIES-843 / IAM M-2473).